We begin with the raw amino-acid sequence, 464 residues long: Soluble pyridine nucleotide transhydrogenase (464 aa).

35–44 (DNRPLVGGNC) serves as a coordination point for FAD.

The protein belongs to the class-I pyridine nucleotide-disulfide oxidoreductase family. The cofactor is FAD.

The protein resides in the cytoplasm. It catalyses the reaction NAD(+) + NADPH = NADH + NADP(+). Functionally, conversion of NADPH, generated by peripheral catabolic pathways, to NADH, which can enter the respiratory chain for energy generation. This Ectopseudomonas mendocina (strain ymp) (Pseudomonas mendocina) protein is Soluble pyridine nucleotide transhydrogenase.